The following is a 162-amino-acid chain: RxLR effector protein PITG_06094 (162 aa).

The first 20 residues, 1-20 (MRLSFILAATLTGLLACATA), serve as a signal peptide directing secretion. Positions 51-91 (RFLRAYNDAEDDSEDPKNVKNTVDAKPADESEDSELSEEER) match the RxLR-dEER motif. The tract at residues 56 to 88 (YNDAEDDSEDPKNVKNTVDAKPADESEDSELSE) is disordered.

Belongs to the RxLR effector family.

It localises to the secreted. It is found in the host cytoplasm. The protein localises to the host nucleus. Its subcellular location is the host nucleolus. Functionally, effector that enhances P.infestans colonization of Nicotiana benthamiana leaves. This is RxLR effector protein PITG_06094 from Phytophthora infestans (strain T30-4) (Potato late blight agent).